The sequence spans 224 residues: Ribose-5-phosphate isomerase A (224 aa).

Substrate-binding positions include Thr-26 to Thr-29, Asp-81 to Asp-84, and Lys-94 to Gly-97. Glu-103 acts as the Proton acceptor in catalysis. Lys-121 contributes to the substrate binding site.

It belongs to the ribose 5-phosphate isomerase family. In terms of assembly, homodimer.

The enzyme catalyses aldehydo-D-ribose 5-phosphate = D-ribulose 5-phosphate. It participates in carbohydrate degradation; pentose phosphate pathway; D-ribose 5-phosphate from D-ribulose 5-phosphate (non-oxidative stage): step 1/1. Catalyzes the reversible conversion of ribose-5-phosphate to ribulose 5-phosphate. The sequence is that of Ribose-5-phosphate isomerase A from Listeria monocytogenes serovar 1/2a (strain ATCC BAA-679 / EGD-e).